Here is a 289-residue protein sequence, read N- to C-terminus: Elongation factor Ts (289 aa).

The segment at 82-85 is involved in Mg(2+) ion dislocation from EF-Tu; that stretch reads TDFL.

This sequence belongs to the EF-Ts family.

It is found in the cytoplasm. Its function is as follows. Associates with the EF-Tu.GDP complex and induces the exchange of GDP to GTP. It remains bound to the aminoacyl-tRNA.EF-Tu.GTP complex up to the GTP hydrolysis stage on the ribosome. This Pseudomonas paraeruginosa (strain DSM 24068 / PA7) (Pseudomonas aeruginosa (strain PA7)) protein is Elongation factor Ts.